The chain runs to 603 residues: Probable lysosomal cobalamin transporter (603 aa).

9 helical membrane passes run 13-33 (IWVAYAVAVALVFFVAVITVF), 50-70 (IVSLTALLATVFLLPVDIALV), 99-119 (IVYYSLYSFDALLCLVVIPFA), 150-170 (IAFIILVIILFLVGFFVPTAA), 201-221 (LLMTLGVLLYVLYTATGLALL), 318-338 (LFGGILLLCLSVILWISMLIT), 353-373 (GYILGHINVFQPVNWVFVKAA), 381-401 (ILMAFLILFLFSSSITGIASV), and 422-442 (ALLIATVMQALIILAINYAVV). A glycan (N-linked (GlcNAc...) asparagine) is linked at N509. Residues 512–532 (VFGAIDFWAQFAFLTVFLLVF) traverse the membrane as a helical segment. An N-linked (GlcNAc...) asparagine glycan is attached at N543. The interval 578-603 (AKRTVGGHPNGQGYGTSGTNGTASSR) is disordered. Over residues 585–595 (HPNGQGYGTSG) the composition is skewed to gly residues. The N-linked (GlcNAc...) asparagine glycan is linked to N597.

Belongs to the LIMR family. LMBRD1 subfamily.

Its subcellular location is the lysosome membrane. Its function is as follows. Probable lysosomal cobalamin transporter. Required to export cobalamin from lysosomes allowing its conversion to cofactors. The protein is Probable lysosomal cobalamin transporter of Neurospora crassa (strain ATCC 24698 / 74-OR23-1A / CBS 708.71 / DSM 1257 / FGSC 987).